We begin with the raw amino-acid sequence, 55 residues long: Large ribosomal subunit protein uL30 (55 aa).

It belongs to the universal ribosomal protein uL30 family. Part of the 50S ribosomal subunit.

Functionally, binds the 5S and 23S rRNAs. The polypeptide is Large ribosomal subunit protein uL30 (Deinococcus radiodurans (strain ATCC 13939 / DSM 20539 / JCM 16871 / CCUG 27074 / LMG 4051 / NBRC 15346 / NCIMB 9279 / VKM B-1422 / R1)).